Here is a 310-residue protein sequence, read N- to C-terminus: 4-hydroxyproline 2-epimerase (310 aa).

Cysteine 88 acts as the Proton acceptor in catalysis. Substrate contacts are provided by residues glycine 89–histidine 90, histidine 208, and aspartate 232. The active-site Proton donor is cysteine 236. Substrate is bound at residue glycine 237–threonine 238.

Belongs to the proline racemase family.

It carries out the reaction trans-4-hydroxy-L-proline = cis-4-hydroxy-D-proline. Catalyzes the epimerization of trans-4-hydroxy-L-proline (t4LHyp) to cis-4-hydroxy-D-proline (c4DHyp). Is likely involved in a degradation pathway that converts t4LHyp to alpha-ketoglutarate. Displays no proline racemase activity. The sequence is that of 4-hydroxyproline 2-epimerase from Acinetobacter baumannii (strain AYE).